We begin with the raw amino-acid sequence, 428 residues long: Adenylosuccinate synthetase (428 aa).

GTP is bound by residues 12 to 18 and 40 to 42; these read GDEGKGK and GHT. The active-site Proton acceptor is aspartate 13. Mg(2+) is bound by residues aspartate 13 and glycine 40. Residues 13–16, 38–41, threonine 129, arginine 143, glutamine 224, threonine 239, and arginine 303 contribute to the IMP site; these read DEGK and NAGH. Histidine 41 acts as the Proton donor in catalysis. Residue 299 to 305 coordinates substrate; it reads VTTGRIR. GTP contacts are provided by residues arginine 305, 331 to 333, and 410 to 412; these read KVD and AYG.

The protein belongs to the adenylosuccinate synthetase family. In terms of assembly, homodimer. It depends on Mg(2+) as a cofactor.

It localises to the cytoplasm. The catalysed reaction is IMP + L-aspartate + GTP = N(6)-(1,2-dicarboxyethyl)-AMP + GDP + phosphate + 2 H(+). The protein operates within purine metabolism; AMP biosynthesis via de novo pathway; AMP from IMP: step 1/2. Functionally, plays an important role in the de novo pathway of purine nucleotide biosynthesis. Catalyzes the first committed step in the biosynthesis of AMP from IMP. This is Adenylosuccinate synthetase from Francisella tularensis subsp. holarctica (strain FTNF002-00 / FTA).